We begin with the raw amino-acid sequence, 131 residues long: Small ribosomal subunit protein uS8 (131 aa).

It belongs to the universal ribosomal protein uS8 family. Part of the 30S ribosomal subunit. Contacts proteins S5 and S12.

Functionally, one of the primary rRNA binding proteins, it binds directly to 16S rRNA central domain where it helps coordinate assembly of the platform of the 30S subunit. In Shewanella amazonensis (strain ATCC BAA-1098 / SB2B), this protein is Small ribosomal subunit protein uS8.